The following is a 484-amino-acid chain: Suppressor of fused homolog (484 aa).

The disordered stretch occupies residues 1-21 (MAELRPSVAPGPAAPPASGPS). Residues 12–21 (PAAPPASGPS) are compositionally biased toward pro residues. Residue lysine 257 forms a Glycyl lysine isopeptide (Lys-Gly) (interchain with G-Cter in ubiquitin) linkage. The interval 279 to 360 (SRPPEDEEDS…SSTAIIPHEL (82 aa)) is disordered. Serine 301 is modified (phosphoserine). The residue at position 303 (lysine 303) is an N6-acetyllysine. Lysine 321 is covalently cross-linked (Glycyl lysine isopeptide (Lys-Gly) (interchain with G-Cter in SUMO2)). Over residues 336 to 347 (THDRAPSRKDSL) the composition is skewed to basic and acidic residues. Phosphoserine occurs at positions 342, 346, and 352. Threonine 353 carries the phosphothreonine modification. Residue serine 481 is modified to Phosphoserine.

The protein belongs to the SUFU family. As to quaternary structure, may form homodimers. Interacts with ULK3; inactivating the protein kinase activity of ULK3. Interacts with RAB23. Part of a DNA-bound corepressor complex containing SAP18, GLI1 and SIN3. Part of a complex containing CTNNB1. Binds BTRC, GLI2, GLI3, SAP18 and STK36. Binds both free and DNA-bound GLI1. Interacts with KIF7. Interacts with GLI3FL and this interaction regulates the formation of either repressor or activator forms of GLI3. Its association with GLI3FL is regulated by Hh signaling and dissociation of the SUFU-GLI3 interaction requires the presence of the ciliary motor KIF3A. Polyubiquitinated at Lys-257 by the SCF(FBXL17) complex, leading to its subsequent degradation and allowing the release of GLI1 for proper hedgehog/smoothened signal transduction. Ubiquitination is impaired by phosphorylation at Ser-342, Ser-346, Ser-352 and Thr-353. In terms of processing, phosphorylation at Ser-342, Ser-346, Ser-352 and Thr-353 prevents ubiquitination by the SCF(FBXL17) complex. In terms of tissue distribution, widely expressed in adult and fetal tissues.

The protein resides in the cytoplasm. It is found in the nucleus. Functionally, negative regulator in the hedgehog/smoothened signaling pathway. Down-regulates GLI1-mediated transactivation of target genes. Part of a corepressor complex that acts on DNA-bound GLI1. May also act by linking GLI1 to BTRC and thereby targeting GLI1 to degradation by the proteasome. Sequesters GLI1, GLI2 and GLI3 in the cytoplasm, this effect is overcome by binding of STK36 to both SUFU and a GLI protein. Negative regulator of beta-catenin signaling. Regulates the formation of either the repressor form (GLI3R) or the activator form (GLI3A) of the full-length form of GLI3 (GLI3FL). GLI3FL is complexed with SUFU in the cytoplasm and is maintained in a neutral state. Without the Hh signal, the SUFU-GLI3 complex is recruited to cilia, leading to the efficient processing of GLI3FL into GLI3R. When Hh signaling is initiated, SUFU dissociates from GLI3FL and the latter translocates to the nucleus, where it is phosphorylated, destabilized, and converted to a transcriptional activator (GLI3A). Required for normal embryonic development. Required for the proper formation of hair follicles and the control of epidermal differentiation. This Mus musculus (Mouse) protein is Suppressor of fused homolog.